We begin with the raw amino-acid sequence, 251 residues long: Triosephosphate isomerase (251 aa).

Residue 9-11 (NWK) participates in substrate binding. The active-site Electrophile is His-95. Glu-167 serves as the catalytic Proton acceptor. Substrate-binding positions include Gly-173, Ser-212, and 233-234 (GG).

This sequence belongs to the triosephosphate isomerase family. As to quaternary structure, homodimer.

The protein localises to the cytoplasm. The catalysed reaction is D-glyceraldehyde 3-phosphate = dihydroxyacetone phosphate. Its pathway is carbohydrate biosynthesis; gluconeogenesis. It participates in carbohydrate degradation; glycolysis; D-glyceraldehyde 3-phosphate from glycerone phosphate: step 1/1. In terms of biological role, involved in the gluconeogenesis. Catalyzes stereospecifically the conversion of dihydroxyacetone phosphate (DHAP) to D-glyceraldehyde-3-phosphate (G3P). The chain is Triosephosphate isomerase from Vibrio sp. (strain ANT-300).